Reading from the N-terminus, the 303-residue chain is Di/tripeptide transport system permease protein DppC (303 aa).

The next 7 helical transmembrane spans lie at A33 to V53, L103 to L123, A131 to A151, V152 to V172, A202 to V222, T225 to V245, and W267 to M287. Residues A99–G288 enclose the ABC transmembrane type-1 domain.

Belongs to the binding-protein-dependent transport system permease family. OppBC subfamily. The complex is composed of two ATP-binding proteins (DppD and DppF), two transmembrane proteins (DppB and DppC) and a solute-binding protein (DppA1-A5). Five orthologous SBPs (DppA1-A5) are present in P.aeruginosa, which increases the substrate specificity of the DppBCDF transporter.

Its subcellular location is the cell inner membrane. Part of the ABC transporter DppABCDF involved in the uptake of various di/tripeptides. Is also involved in the uptake of phaseolotoxin, a toxic tripeptide inhibiting the enzyme ornithine carbamoyltransferase. Responsible for the translocation of the substrate across the membrane. This chain is Di/tripeptide transport system permease protein DppC, found in Pseudomonas aeruginosa (strain UCBPP-PA14).